The following is a 183-amino-acid chain: Non-specific lipid transfer protein GPI-anchored 15 (183 aa).

An N-terminal signal peptide occupies residues 1 to 24 (MGYRRSYAITFVALVAALWSVTKA). 4 cysteine pairs are disulfide-bonded: C30–C71, C40–C55, C56–C97, and C69–C107. N-linked (GlcNAc...) asparagine glycans are attached at residues N47 and N86. Residues 108 to 158 (NAATGPTAQPPAPSPTEKTPDVTLTPTSLPGARSGVGGGSKTVPSVGTGSS) are disordered. Residues 149 to 158 (TVPSVGTGSS) are compositionally biased toward polar residues. A lipid anchor (GPI-anchor amidated serine) is attached at S158. A propeptide spans 159–183 (SRNVDPLPLHFLMFAVLVVCTSSFL) (removed in mature form).

Belongs to the plant LTP family. Expressed in seedlings, preferentially in the endodermis of hypocotyls and roots. Also observed in siliques.

It is found in the cell membrane. Probable lipid transfer protein. The polypeptide is Non-specific lipid transfer protein GPI-anchored 15 (Arabidopsis thaliana (Mouse-ear cress)).